A 303-amino-acid polypeptide reads, in one-letter code: Coenzyme PQQ synthesis protein B (303 aa).

This sequence belongs to the PqqB family.

It functions in the pathway cofactor biosynthesis; pyrroloquinoline quinone biosynthesis. In terms of biological role, may be involved in the transport of PQQ or its precursor to the periplasm. This is Coenzyme PQQ synthesis protein B from Pseudomonas syringae pv. syringae (strain B728a).